The chain runs to 327 residues: Ribonucleoside-diphosphate reductase small chain (327 aa).

Fe cation contacts are provided by Asp-70, Glu-101, and His-104. Tyr-108 is a catalytic residue. Fe cation contacts are provided by Glu-164, Glu-198, and His-201.

Belongs to the ribonucleoside diphosphate reductase small chain family. Heterotetramer composed of a homodimer of the large subunit (R1) and a homodimer of the small subunit (R2). Larger multisubunit protein complex are also active, composed of (R1)n(R2)n. Requires Fe cation as cofactor.

It catalyses the reaction a 2'-deoxyribonucleoside 5'-diphosphate + [thioredoxin]-disulfide + H2O = a ribonucleoside 5'-diphosphate + [thioredoxin]-dithiol. Its function is as follows. Ribonucleoside-diphosphate reductase holoenzyme provides the precursors necessary for viral DNA synthesis. Allows virus growth in non-dividing cells. Catalyzes the biosynthesis of deoxyribonucleotides from the corresponding ribonucleotides. This is Ribonucleoside-diphosphate reductase small chain from African swine fever virus (isolate Tick/Malawi/Lil 20-1/1983) (ASFV).